A 501-amino-acid chain; its full sequence is Oxygen-independent coproporphyrinogen-III oxidase-like protein HemZ (501 aa).

The region spanning 163–405 (DLYRVKDEVS…VAWTKEHGYV (243 aa)) is the Radical SAM core domain. Tyr-174 provides a ligand contact to S-adenosyl-L-methionine. The [4Fe-4S] cluster site is built by Cys-180 and Cys-184. Position 186 (Tyr-186) interacts with S-adenosyl-L-methionine. [4Fe-4S] cluster is bound at residue Cys-187. S-adenosyl-L-methionine contacts are provided by residues Gly-233, 234–235 (GT), Glu-267, Gln-295, Arg-307, and Asp-332.

It belongs to the anaerobic coproporphyrinogen-III oxidase family. HemZ subfamily. [4Fe-4S] cluster is required as a cofactor.

Its pathway is porphyrin-containing compound metabolism; protoporphyrin-IX biosynthesis. Functionally, involved in the biosynthesis of porphyrin-containing compound. The sequence is that of Oxygen-independent coproporphyrinogen-III oxidase-like protein HemZ (hemZ) from Bacillus subtilis (strain 168).